The chain runs to 230 residues: MADEKNKPENPDLDQRDINNPRDREALKQAADDFLKARRAEARAEAAADEAEGEVDETANRIAVLEADNTELKDQMLRVAAEMENLRKRTQRDVQDARAYAITNFARDMLSVSDNLRRALDTIPADALEADSNLKSLSEGVEMTERAMLLALERHGVKKLEPEGQKFDPNFHQAMFEVPNPDLPNNTVVQVVQAGYAIGDRVLRPAMVGVSKGGPKVSAENGASTSEDNA.

2 disordered regions span residues Met1–Lys28 and Gly209–Ala230. A compositionally biased stretch (polar residues) spans Asn221–Ala230.

It belongs to the GrpE family. As to quaternary structure, homodimer.

It is found in the cytoplasm. Its function is as follows. Participates actively in the response to hyperosmotic and heat shock by preventing the aggregation of stress-denatured proteins, in association with DnaK and GrpE. It is the nucleotide exchange factor for DnaK and may function as a thermosensor. Unfolded proteins bind initially to DnaJ; upon interaction with the DnaJ-bound protein, DnaK hydrolyzes its bound ATP, resulting in the formation of a stable complex. GrpE releases ADP from DnaK; ATP binding to DnaK triggers the release of the substrate protein, thus completing the reaction cycle. Several rounds of ATP-dependent interactions between DnaJ, DnaK and GrpE are required for fully efficient folding. In Brucella ovis (strain ATCC 25840 / 63/290 / NCTC 10512), this protein is Protein GrpE.